Consider the following 770-residue polypeptide: Amyloid-beta precursor protein (770 aa).

Residues 1–17 form the signal peptide; the sequence is MLPGLALVLLAAWTARA. Over 18–701 the chain is Extracellular; it reads LEVPTDGNAG…AEDVGSNKGA (684 aa). The segment at 28–123 is GFLD subdomain; sequence LLAEPQVAMF…PYRCLVGEFV (96 aa). An E1 domain is found at 28 to 189; sequence LLAEPQVAMF…RGVEFVCCPL (162 aa). Disulfide bonds link Cys38–Cys62, Cys73–Cys117, Cys98–Cys105, Cys133–Cys187, Cys144–Cys174, and Cys158–Cys186. A heparin-binding site is contributed by 96–110; it reads NWCKRSRKQCKTHTH. Positions 131–189 are cuBD subdomain; it reads DKCKFLHQERMDVCETHLHWHTVAKETCSEKSTNLHDYGMLLPCGIDKFRGVEFVCCPL. Residues 135 to 155 are copper-binding; it reads FLHQERMDVCETHLHWHTVAK. 3 residues coordinate Cu(2+): His147, His151, and Tyr168. The zinc-binding stretch occupies residues 181–188; sequence GVEFVCCP. Zn(2+) contacts are provided by Glu183, Cys186, and Cys187. Residues 196–207 are compositionally biased toward acidic residues; that stretch reads IDSADAEEDDSD. A disordered region spans residues 196–284; the sequence is IDSADAEEDD…TTTTTTESVE (89 aa). Residue Ser198 is modified to Phosphoserine; by CK2. Ser206 is modified (phosphoserine; by CK1). A sulfotyrosine mark is found at Tyr217 and Tyr262. A compositionally biased stretch (acidic residues) spans 228-264; it reads VAEEEEVADVEEEEAEDDEDDEDGDEVEEEAEEPYEE. The span at 268–281 shows a compositional bias: low complexity; it reads RTTSIATTTTTTTE. 3 disulfide bridges follow: Cys291/Cys341, Cys300/Cys324, and Cys316/Cys337. The 51-residue stretch at 291–341 folds into the BPTI/Kunitz inhibitor domain; it reads CSEQAETGPCRAMISRWYFDVTEGKCAPFFYGGCGGNRNNFDTEEYCMAVC. Tyr336 carries the post-translational modification Sulfotyrosine. The OX-2 motif lies at 344–365; that stretch reads VMSQSLLKTTQEHLPQDPVKLP. Positions 374-565 constitute an E2 domain; it reads AVDKYLETPG…EEIQDEVDEL (192 aa). The interval 391-423 is heparin-binding; it reads FQKAKERLEAKHRERMSQVMREWEEAERQAKNL. Ser441 bears the Phosphoserine mark. The interval 491–522 is heparin-binding; the sequence is FNMLKKYVRAEQKDRQHTLKHFEHVRMVDPKK. Tyr497 bears the Phosphotyrosine mark. The tract at residues 523–540 is collagen-binding; the sequence is AAQIRSQVMTHLRVIYER. Asn542 and Asn571 each carry an N-linked (GlcNAc...) asparagine glycan. The Cu(2+) site is built by His677, Tyr681, His684, and His685. His677, Tyr681, His684, and His685 together coordinate Zn(2+). Positions 695 to 722 are interaction with PSEN1; it reads VGSNKGAIIGLMVGGVVIATVIVITLVM. A helical membrane pass occupies residues 702–722; that stretch reads IIGLMVGGVVIATVIVITLVM. Residues 723–770 are Cytoplasmic-facing; sequence LKKKQYTSIHHGVVEVDAAVTPEERHLSKMQQNGYENPTYKFFEQMQN. Residues 724–734 carry the Basolateral sorting signal motif; sequence KKKQYTSIHHG. Thr729 carries the post-translational modification Phosphothreonine. Ser730 carries the phosphoserine; by APP-kinase I modification. An interaction with G(o)-alpha region spans residues 732 to 751; it reads HHGVVEVDAAVTPEERHLSK. At Thr743 the chain carries Phosphothreonine; by CDK5 and MAPK10. Positions 756 to 770 are required for the interaction with KIF5B and for anterograde transport in axons; sequence GYENPTYKFFEQMQN. Position 757 is a phosphotyrosine; by ABL1 (Tyr757). A YENPXY motif; contains endocytosis signal motif is present at residues 757-762; it reads YENPTY. Residue Lys763 forms a Glycyl lysine isopeptide (Lys-Gly) (interchain with G-Cter in ubiquitin) linkage.

Belongs to the APP family. Binds, via its C-terminus, to the PID domain of several cytoplasmic proteins, including APBB family members, the APBA family, MAPK8IP1, SHC1 and NUMB and DAB1. Binding to DAB1 inhibits its serine phosphorylation. Interacts (via NPXY motif) with DAB2 (via PID domain); the interaction is impaired by tyrosine phosphorylation of the NPXY motif. Also interacts with GPCR-like protein BPP, APPBP1, IB1, KNS2 (via its TPR domains), APPBP2 (via BaSS) and DDB1. In vitro, it binds MAPT via the MT-binding domains. Associates with microtubules in the presence of ATP and in a kinesin-dependent manner. Interacts, through a C-terminal domain, with GNAO1. Amyloid-beta protein 42 binds CHRNA7 in hippocampal neurons. Amyloid-beta associates with HADH2. Interacts with CPEB1, ANKS1B and AGER. Interacts with ITM2B. Interacts with ITM2C. Interacts with IDE. Can form homodimers; dimerization is enhanced in the presence of Cu(2+) ions. Can form homodimers; this is promoted by heparin binding. Amyloid-beta protein 40 interacts with S100A9. CTF-alpha product of APP interacts with GSAP. Interacts with SORL1 (via N-terminal ectodomain); this interaction retains APP in the trans-Golgi network and reduces processing into soluble APP-alpha and amyloid-beta peptides. The C99 fragment also interacts with SORL1. Interacts with PLD3. Interacts with VDAC1. Interacts with NSG1; could regulate APP processing. Amyloid-beta protein 42 interacts with FPR2. Interacts (via transmembrane region) with PSEN1; the interaction is direct. Interacts with LRRK2. Interacts (via cytoplasmic domain) with KIF5B. Interacts (via C-terminus) with APBB2/FE65L1 (via C-terminus). Interacts (via intracellular domain) with APBB3. In terms of processing, proteolytically processed under normal cellular conditions. Cleavage either by alpha-secretase, beta-secretase or theta-secretase leads to generation and extracellular release of soluble APP peptides, S-APP-alpha and S-APP-beta, and the retention of corresponding membrane-anchored C-terminal fragments, C80, C83 and C99. Subsequent processing of C80 and C83 by gamma-secretase yields P3 peptides. This is the major secretory pathway and is non-amyloidogenic. Alternatively, presenilin/nicastrin-mediated gamma-secretase processing of C99 releases the amyloid-beta proteins, amyloid-beta protein 40 and amyloid-beta protein 42, major components of amyloid plaques, and the cytotoxic C-terminal fragments, gamma-CTF(50), gamma-CTF(57) and gamma-CTF(59). PSEN1 cleavage is more efficient with C83 than with C99 as substrate (in vitro). Amyloid-beta protein 40 and Amyloid-beta protein 42 are cleaved by ACE. Many other minor amyloid-beta peptides, amyloid-beta 1-X peptides, are found in cerebral spinal fluid (CSF) including the amyloid-beta X-15 peptides, produced from the cleavage by alpha-secretase. Proteolytically cleaved by caspases during neuronal apoptosis. Cleavage at Asp-739 by either caspase-3, -8 or -9 results in the production of the neurotoxic C31 peptide and the increased production of amyloid-beta peptides. Post-translationally, N- and O-glycosylated. In terms of processing, phosphorylation in the C-terminal on tyrosine, threonine and serine residues is neuron-specific. Phosphorylation can affect APP processing, neuronal differentiation and interaction with other proteins. Phosphorylated on Thr-743 in neuronal cells by Cdc5 kinase and Mapk10, in dividing cells by Cdc2 kinase in a cell-cycle dependent manner with maximal levels at the G2/M phase and, in vitro, by GSK-3-beta. The Thr-743 phosphorylated form causes a conformational change which reduces binding of Fe65 family members. In dopaminergic (DA) neurons, phosphorylation on Thr-743 by LRKK2 promotes the production and the nuclear translocation of the APP intracellular domain (AICD) which induces DA neuron apoptosis. Phosphorylation on Tyr-757 is required for SHC binding. Phosphorylated in the extracellular domain by casein kinases on both soluble and membrane-bound APP. This phosphorylation is inhibited by heparin. Extracellular binding and reduction of copper, results in a corresponding oxidation of Cys-144 and Cys-158, and the formation of a disulfide bond. Post-translationally, trophic-factor deprivation triggers the cleavage of surface APP by beta-secretase to release sAPP-beta which is further cleaved to release an N-terminal fragment of APP (N-APP). In terms of processing, amyloid-beta peptides are degraded by IDE. Sulfated on tyrosine residues.

The protein resides in the cell membrane. It is found in the membrane. The protein localises to the perikaryon. Its subcellular location is the cell projection. It localises to the growth cone. The protein resides in the clathrin-coated pit. It is found in the early endosome. The protein localises to the cytoplasmic vesicle. Its subcellular location is the endoplasmic reticulum. It localises to the golgi apparatus. The protein resides in the secreted. It is found in the cell surface. The protein localises to the nucleus. Its subcellular location is the cytoplasm. Functions as a cell surface receptor and performs physiological functions on the surface of neurons relevant to neurite growth, neuronal adhesion and axonogenesis. Interaction between APP molecules on neighboring cells promotes synaptogenesis. Involved in cell mobility and transcription regulation through protein-protein interactions. Can promote transcription activation through binding to APBB1-KAT5 and inhibit Notch signaling through interaction with Numb. Couples to apoptosis-inducing pathways such as those mediated by G(o) and JIP. Inhibits G(o)-alpha ATPase activity. Acts as a kinesin I membrane receptor, mediating the axonal transport of beta-secretase and presenilin 1. By acting as a kinesin I membrane receptor, plays a role in axonal anterograde transport of cargo towards synapses in axons. May be involved in copper homeostasis/oxidative stress through copper ion reduction. In vitro, copper-metallated APP induces neuronal death directly or is potentiated through Cu(2+)-mediated low-density lipoprotein oxidation. Can regulate neurite outgrowth through binding to components of the extracellular matrix such as heparin and collagen I and IV. Induces a AGER-dependent pathway that involves activation of p38 MAPK, resulting in internalization of amyloid-beta peptide and mitochondrial dysfunction in cultured cortical neurons. Provides Cu(2+) ions for GPC1 which are required for release of nitric oxide (NO) and subsequent degradation of the heparan sulfate chains on GPC1. Functionally, amyloid-beta peptides are lipophilic metal chelators with metal-reducing activity. Binds transient metals such as copper, zinc and iron. In terms of biological role, the gamma-CTF peptides as well as the caspase-cleaved peptides, including C31, are potent enhancers of neuronal apoptosis. The sequence is that of Amyloid-beta precursor protein from Sus scrofa (Pig).